Here is a 227-residue protein sequence, read N- to C-terminus: 2-heptyl-1-hydroxyquinolin-4(1H)-one methyltransferase (227 aa).

This sequence belongs to the methyltransferase superfamily. In terms of assembly, monomer.

It localises to the cytoplasm. The catalysed reaction is 2-heptyl-1-hydroxy-4(1H)-quinolinone + S-adenosyl-L-methionine = 2-heptyl-1-methoxy-4(1H)-quinolinone + S-adenosyl-L-homocysteine + H(+). It catalyses the reaction 3-bromo-2-heptyl-1-hydroxy-4(1H)-quinolinone + S-adenosyl-L-methionine = 3-bromo-2-heptyl-1-methoxy-4(1H)-quinolinone + S-adenosyl-L-homocysteine + H(+). Its function is as follows. Involved in cellular response to chemical stress and may contribute to resistance toward antimicrobial natural compounds as well as drugs. Catalyzes the methylation and detoxification of the P.aeruginosa toxin 2-heptyl-1-hydroxy-4(1H)-quinolinone (HQNO) to 2-heptyl-1-methoxy-4(1H)-quinolinone (HMOQ). Can also methylate 3-bromo-2-heptyl-1-hydroxy-4(1H)-quinolinone, and shows much lower activity with 1-hydroxyquinolin-4(1H)-one, quercetin, 4-hydroxyquinolin-2(1H)-one (DHQ) and 4-hydroxyisoquinolin-1(2H)-one. This chain is 2-heptyl-1-hydroxyquinolin-4(1H)-one methyltransferase, found in Mycobacteroides abscessus (strain ATCC 19977 / DSM 44196 / CCUG 20993 / CIP 104536 / JCM 13569 / NCTC 13031 / TMC 1543 / L948) (Mycobacterium abscessus).